We begin with the raw amino-acid sequence, 401 residues long: Rho-N domain-containing protein 1, chloroplastic (401 aa).

A chloroplast-targeting transit peptide spans 1-63; it reads MAMSGTFHLT…VPNRSSFVCR (63 aa). Disordered stretches follow at residues 73–129 and 180–361; these read PDFS…PGPR and KHSG…EEAV. Composition is skewed to polar residues over residues 102–126, 210–223, and 240–265; these read DMLS…TSSP, TGNL…DNNA, and PRSQ…VTWT. Positions 266–290 are enriched in basic and acidic residues; that stretch reads QKKDTVELHDEPEHEPAYEHEHEPE. Over residues 339 to 358 the composition is skewed to acidic residues; that stretch reads LSDDDESLDDADEDSDEAEE. Positions 339 to 371 form a coiled coil; the sequence is LSDDDESLDDADEDSDEAEEEAVKDLSELKLVE.

In terms of assembly, homodimer or homomultimer. Part of a chloroplastic degradosome-like complex. Interacts with RNE.

It is found in the plastid. It localises to the chloroplast. In terms of biological role, binds to and supports processing of specific plastid RNAs. Associates via its C-terminal Rho-N domain to single stranded regions of 16S and 23S rRNAs or to rbcL mRNAs. May be involved in targeting transcripts to RNases such as RNE or RNase J. The protein is Rho-N domain-containing protein 1, chloroplastic (RHON1) of Arabidopsis thaliana (Mouse-ear cress).